A 499-amino-acid chain; its full sequence is Anaerobic nitric oxide reductase flavorubredoxin (499 aa).

Residues 30–210 (TKGTSYNSYL…PFSALVTAKI (181 aa)) form a zinc metallo-hydrolase region. Positions 79, 81, 83, 147, 166, and 227 each coordinate Fe cation. Positions 254-393 (ITLFYDSMSN…LCREHGQFIA (140 aa)) constitute a Flavodoxin-like domain. FMN-binding positions include 260-264 (SMSNN) and 342-369 (AFGS…ETAV). Residues 447–498 (KQCMLCTVCNWVYDPEIGEPNQGVEPNTAWIDVPDYFLCPECNLGKDVFVEV) form the Rubredoxin-like domain. C452, C455, C485, and C488 together coordinate Fe cation.

In the N-terminal section; belongs to the zinc metallo-hydrolase group 3 family. In terms of assembly, homotetramer. It depends on Fe cation as a cofactor. FMN is required as a cofactor.

It is found in the cytoplasm. Its pathway is nitrogen metabolism; nitric oxide reduction. Its function is as follows. Anaerobic nitric oxide reductase; uses NADH to detoxify nitric oxide (NO), protecting several 4Fe-4S NO-sensitive enzymes. Has at least 2 reductase partners, only one of which (NorW, flavorubredoxin reductase) has been identified. NO probably binds to the di-iron center; electrons enter from the NorW at rubredoxin and are transferred sequentially to the FMN center and the di-iron center. Also able to function as an aerobic oxygen reductase. The protein is Anaerobic nitric oxide reductase flavorubredoxin of Aliivibrio salmonicida (strain LFI1238) (Vibrio salmonicida (strain LFI1238)).